Here is a 156-residue protein sequence, read N- to C-terminus: Enhancer of split M1 protein (156 aa).

Positions Met1–Gly19 are cleaved as a signal peptide. 2 consecutive Kazal-like domains span residues Ser23 to Ser81 and Lys96 to Cys156. 5 cysteine pairs are disulfide-bonded: Cys29-Cys62, Cys33-Cys55, Cys102-Cys135, Cys106-Cys128, and Cys114-Cys156.

The polypeptide is Enhancer of split M1 protein (Drosophila simulans (Fruit fly)).